Reading from the N-terminus, the 362-residue chain is Ferredoxin--NADP reductase, leaf-type isozyme, chloroplastic (362 aa).

The segment at 1-20 (MATAVSAAVSLPSSKSTSFS) is disordered. The N-terminal 62 residues, 1 to 62 (MATAVSAAVS…RAQVTTEAPA (62 aa)), are a transit peptide targeting the chloroplast. Positions 10-20 (SLPSSKSTSFS) are enriched in low complexity. The 123-residue stretch at 83–205 (KEPYVGRCLL…TGPVGKEMLM (123 aa)) folds into the FAD-binding FR-type domain. FAD-binding positions include 141-144 (RLYS), 162-164 (CVK), Tyr-168, 179-181 (VCS), and Thr-220. NADP(+)-binding residues include Ser-144 and Lys-164. NADP(+)-binding positions include Thr-220, 252 to 253 (VP), 282 to 283 (SR), Lys-292, 321 to 322 (GL), and Glu-360.

The protein belongs to the ferredoxin--NADP reductase type 1 family. It depends on FAD as a cofactor.

The protein resides in the plastid. It is found in the chloroplast stroma. It localises to the chloroplast thylakoid membrane. The enzyme catalyses 2 reduced [2Fe-2S]-[ferredoxin] + NADP(+) + H(+) = 2 oxidized [2Fe-2S]-[ferredoxin] + NADPH. It participates in energy metabolism; photosynthesis. May play a key role in regulating the relative amounts of cyclic and non-cyclic electron flow to meet the demands of the plant for ATP and reducing power. The chain is Ferredoxin--NADP reductase, leaf-type isozyme, chloroplastic (PETH) from Nicotiana tabacum (Common tobacco).